Here is a 1342-residue protein sequence, read N- to C-terminus: DNA-directed RNA polymerase subunit beta (1342 aa).

2 positions are modified to N6-acetyllysine: Lys-1022 and Lys-1200.

Belongs to the RNA polymerase beta chain family. The RNAP catalytic core consists of 2 alpha, 1 beta, 1 beta' and 1 omega subunit. When a sigma factor is associated with the core the holoenzyme is formed, which can initiate transcription.

It catalyses the reaction RNA(n) + a ribonucleoside 5'-triphosphate = RNA(n+1) + diphosphate. In terms of biological role, DNA-dependent RNA polymerase catalyzes the transcription of DNA into RNA using the four ribonucleoside triphosphates as substrates. The sequence is that of DNA-directed RNA polymerase subunit beta from Escherichia coli O6:K15:H31 (strain 536 / UPEC).